We begin with the raw amino-acid sequence, 31 residues long: Protamine-Z (31 aa).

Residues 1–31 (ARRRRSRRASRPVRRRRPRRVSRRRRARRRR) are disordered.

Testis.

It is found in the nucleus. The protein resides in the chromosome. In terms of biological role, protamines substitute for histones in the chromatin of sperm during the haploid phase of spermatogenesis. They compact sperm DNA into a highly condensed, stable and inactive complex. This Clupea harengus (Atlantic herring) protein is Protamine-Z.